Consider the following 647-residue polypeptide: Putative ankyrin repeat protein L764 (647 aa).

ANK repeat units follow at residues 123–154 (LKDR…QINL), 202–231 (LTQE…EYDL), 233–256 (EIIN…SLNE), 258–284 (NVNI…TINS), 289–319 (SMFS…DLTV), 348–377 (DCNL…DLKK), 401–431 (NDVN…NIDL), 529–558 (FILK…DNNE), and 588–617 (NGQN…DVKN).

The sequence is that of Putative ankyrin repeat protein L764 from Acanthamoeba polyphaga (Amoeba).